We begin with the raw amino-acid sequence, 241 residues long: Ribose-5-phosphate isomerase A (241 aa).

Substrate-binding positions include 28-31 (TGST), 83-86 (DGAD), and 96-99 (KGGG). E105 serves as the catalytic Proton acceptor. K123 contacts substrate.

The protein belongs to the ribose 5-phosphate isomerase family. In terms of assembly, homodimer.

It catalyses the reaction aldehydo-D-ribose 5-phosphate = D-ribulose 5-phosphate. Its pathway is carbohydrate degradation; pentose phosphate pathway; D-ribose 5-phosphate from D-ribulose 5-phosphate (non-oxidative stage): step 1/1. Its function is as follows. Catalyzes the reversible conversion of ribose-5-phosphate to ribulose 5-phosphate. The chain is Ribose-5-phosphate isomerase A from Rhodopseudomonas palustris (strain BisA53).